Consider the following 25-residue polypeptide: DCPSDWSNHEGHCYRVFNEWMNWAD.

Positions 1 to 25 (DCPSDWSNHEGHCYRVFNEWMNWAD) constitute a C-type lectin domain. Cys-2 and Cys-13 are disulfide-bonded.

This sequence belongs to the snaclec family. As to quaternary structure, heterodimer of subunits alpha and beta; disulfide-linked. Expressed by the venom gland.

Its subcellular location is the secreted. In terms of biological role, thrombin (F2) inhibitor that inhibits aggregation of rabbit platelets induced by alpha-thrombin. In Bothrops alternatus (Urutu), this protein is Snaclec bothroalternin subunit alpha/beta.